The following is a 625-amino-acid chain: Dual specificity protein phosphatase 8 (625 aa).

The Rhodanese domain maps to 23–138 (GPGGPLVIDS…FSSCFPGLCE (116 aa)). Residues 160–302 (GLTRILPHLY…LLEYERSLKL (143 aa)) enclose the Tyrosine-protein phosphatase domain. The active-site Phosphocysteine intermediate is the Cys246. The tract at residues 306-586 (LQGDPGTPSG…PAPETQFKRR (281 aa)) is disordered. The segment covering 380-389 (SSDRLQDTNR) has biased composition (basic and acidic residues). The segment covering 431-448 (AALGLSSPSPDSPDAAPE) has biased composition (low complexity). Positions 555-570 (DLRRREAARAEPRDAR) are enriched in basic and acidic residues.

It belongs to the protein-tyrosine phosphatase family. Non-receptor class dual specificity subfamily. As to quaternary structure, monomer. In terms of tissue distribution, abundant in brain, heart and skeletal muscle.

The protein resides in the cytoplasm. It localises to the nucleus. It carries out the reaction O-phospho-L-tyrosyl-[protein] + H2O = L-tyrosyl-[protein] + phosphate. It catalyses the reaction O-phospho-L-seryl-[protein] + H2O = L-seryl-[protein] + phosphate. The enzyme catalyses O-phospho-L-threonyl-[protein] + H2O = L-threonyl-[protein] + phosphate. Its function is as follows. Has phosphatase activity with synthetic phosphatase substrates and negatively regulates mitogen-activated protein kinase activity, presumably by catalysing their dephosphorylation. Expected to display protein phosphatase activity toward phosphotyrosine, phosphoserine and phosphothreonine residues. The sequence is that of Dual specificity protein phosphatase 8 (DUSP8) from Homo sapiens (Human).